The following is a 704-amino-acid chain: Preterpestacin I synthase tpcA (704 aa).

Positions M1–W329 are terpene cyclase. A Mg(2+)-binding site is contributed by D96. Substrate is bound by residues D96, N231, S235–E239, and R325–Q326. A DDXXD 1 motif is present at residues D96–E100. Positions N231 to E239 match the NSE/DTE motif. Positions K330 to S688 are prenyltransferase. The tract at residues K361–V380 is disordered. Isopentenyl diphosphate is bound by residues K406, R409, and H438. Mg(2+) is bound by residues D445 and D449. The DDXXD 2 signature appears at D445–D449. R454 contributes to the dimethylallyl diphosphate binding site. R455 serves as a coordination point for isopentenyl diphosphate. Dimethylallyl diphosphate is bound by residues K532, T533, Q568, N575, K583, and K593.

This sequence in the N-terminal section; belongs to the terpene synthase family. In the C-terminal section; belongs to the FPP/GGPP synthase family. As to quaternary structure, hexamer. It depends on Mg(2+) as a cofactor.

The catalysed reaction is isopentenyl diphosphate + (2E,6E)-farnesyl diphosphate = (2E,6E,10E)-geranylgeranyl diphosphate + diphosphate. It carries out the reaction isopentenyl diphosphate + (2E,6E,10E)-geranylgeranyl diphosphate = (2E,6E,10E,14E)-geranylfarnesyl diphosphate + diphosphate. Its pathway is secondary metabolite biosynthesis; terpenoid biosynthesis. Functionally, bifunctional terpene synthase; part of the gene cluster that mediates the biosynthesis of terpestacin. The bifunctional terpene synthase tpcA converts isopentenyl diphosphate (IPP) and dimethylallyl diphosphate (DMAPP) into the sesterterpene preterpestacin I. The C-terminal prenyltransferase (PT) domain of tpcA catalyzes formation of GFPP, whereas the N-terminal terpene cyclase (TC) domain catalyzes the cyclization of GFPP into preterpestacin I. The cytochrome P450 monooxygenase tpcB then hydroxylates preterpestacin I to yield 24-hydroxypreterpstacin I (renamed as preterpestacin II) whereas the cytochrome P450 monooxygenase tpcC further hydroxylates preterpestacin II to yield 16,17-dihydroxypreterpestacin II (renamed as preterpestacin III). Finally, the FAD-dependent monooxygenase tpcD converts preterpestacin III into terpestacin. This Cochliobolus heterostrophus (strain C5 / ATCC 48332 / race O) (Southern corn leaf blight fungus) protein is Preterpestacin I synthase tpcA.